Here is a 470-residue protein sequence, read N- to C-terminus: Probable G-protein coupled receptor 152 (470 aa).

A disordered region spans residues M1–S25. Residues M1 to T33 lie on the Extracellular side of the membrane. Residues V34–A54 form a helical membrane-spanning segment. Residues G55–R65 lie on the Cytoplasmic side of the membrane. The chain crosses the membrane as a helical span at residues L66–F86. Residues Q87–R105 lie on the Extracellular side of the membrane. Residues C104 and C182 are joined by a disulfide bond. Residues F106–S126 traverse the membrane as a helical segment. The Cytoplasmic segment spans residues L127 to P148. The chain crosses the membrane as a helical span at residues L149–F169. Topologically, residues P170 to R194 are extracellular. A helical membrane pass occupies residues M195–T215. Topologically, residues Q216 to Q257 are cytoplasmic. Residues L258–V278 form a helical membrane-spanning segment. The Extracellular portion of the chain corresponds to Y279–D281. A helical membrane pass occupies residues Y282–L302. Over R303–T470 the chain is Cytoplasmic. Residues P322–T470 form a disordered region. Polar residues-rich tracts occupy residues F325 to D335 and A348 to T414. Residues P415 to P425 show a composition bias toward low complexity.

This sequence belongs to the G-protein coupled receptor 1 family.

Its subcellular location is the cell membrane. In terms of biological role, orphan receptor. This is Probable G-protein coupled receptor 152 (GPR152) from Homo sapiens (Human).